Here is a 499-residue protein sequence, read N- to C-terminus: Gypsy retrotransposon integrase-like protein 1 (499 aa).

One can recognise an Integrase catalytic domain in the interval 113 to 270 (KVENPWSIVT…TPYFQMFNRN (158 aa)).

This Bos taurus (Bovine) protein is Gypsy retrotransposon integrase-like protein 1 (GIN1).